The sequence spans 220 residues: Elongation factor Ts, chloroplastic (220 aa).

The protein belongs to the EF-Ts family.

Its subcellular location is the plastid. It localises to the chloroplast. In terms of biological role, associates with the EF-Tu.GDP complex and induces the exchange of GDP to GTP. It remains bound to the aminoacyl-tRNA.EF-Tu.GTP complex up to the GTP hydrolysis stage on the ribosome. The protein is Elongation factor Ts, chloroplastic (tsf) of Porphyra purpurea (Red seaweed).